The primary structure comprises 308 residues: Porphobilinogen deaminase (308 aa).

The residue at position 240 (Cys240) is an S-(dipyrrolylmethanemethyl)cysteine.

It belongs to the HMBS family. In terms of assembly, monomer. It depends on dipyrromethane as a cofactor.

The catalysed reaction is 4 porphobilinogen + H2O = hydroxymethylbilane + 4 NH4(+). Its pathway is porphyrin-containing compound metabolism; protoporphyrin-IX biosynthesis; coproporphyrinogen-III from 5-aminolevulinate: step 2/4. Its function is as follows. Tetrapolymerization of the monopyrrole PBG into the hydroxymethylbilane pre-uroporphyrinogen in several discrete steps. This chain is Porphobilinogen deaminase, found in Campylobacter hominis (strain ATCC BAA-381 / DSM 21671 / CCUG 45161 / LMG 19568 / NCTC 13146 / CH001A).